A 224-amino-acid polypeptide reads, in one-letter code: UPF0758 protein IL0240 (224 aa).

An MPN domain is found at 102-224; the sequence is GFTEPTMVKD…PISFAERGLL (123 aa). Zn(2+) contacts are provided by His-173, His-175, and Asp-186. A JAMM motif motif is present at residues 173–186; it reads HNHPSGVAEPSQAD.

Belongs to the UPF0758 family.

This chain is UPF0758 protein IL0240, found in Idiomarina loihiensis (strain ATCC BAA-735 / DSM 15497 / L2-TR).